The chain runs to 839 residues: A disintegrin and metalloproteinase with thrombospondin motifs 4 (839 aa).

The first 51 residues, 1–51 (MSHMDSHPGRGLADGWLWGIQPRLLLPTVPVSGSRLVWLLLLASLLPSAWP), serve as a signal peptide directing secretion. Residues 52–212 (ASPLPREEEI…PSPSPRRAKR (161 aa)) constitute a propeptide that is removed on maturation. Asn68 carries N-linked (GlcNAc...) asparagine glycosylation. The tract at residues 166–209 (EGGAPNSAGGPGAHILRRKSPVSGQGPMCNVKAPPGKPSPSPRR) is disordered. The short motif at 192-199 (PMCNVKAP) is the Cysteine switch element. Position 194 (Cys194) interacts with Zn(2+). The Peptidase M12B domain maps to 218–428 (RFVETLVVAD…GFGHCLLDKP (211 aa)). 11 disulfides stabilise this stretch: Cys293-Cys345, Cys322-Cys327, Cys339-Cys423, Cys377-Cys407, Cys449-Cys472, Cys460-Cys482, Cys467-Cys501, Cys495-Cys506, Cys532-Cys569, Cys536-Cys574, and Cys547-Cys559. His361 is a binding site for Zn(2+). Glu362 is an active-site residue. Zn(2+) contacts are provided by His365 and His371. Residues 437 to 519 (TFPGKDYDAD…DQLQAFNVPQ (83 aa)) enclose the Disintegrin domain. A TSP type-1 domain is found at 520–575 (AGGWGPWGSWGDCSRSCGGGVQFSSRDCTRPVPRNGGKYCEGRRTRFRSCNTQDCP). The tract at residues 686–839 (SKQSGSFKKF…LRRRSWAGRK (154 aa)) is spacer.

As to quaternary structure, interacts with SRPX2. It depends on Zn(2+) as a cofactor. Post-translationally, the precursor is cleaved by a furin endopeptidase. Glycosylated. Can be O-fucosylated by POFUT2 on a serine or a threonine residue found within the consensus sequence C1-X(2)-(S/T)-C2-G of the TSP type-1 repeat domains where C1 and C2 are the first and second cysteine residue of the repeat, respectively. Fucosylated repeats can then be further glycosylated by the addition of a beta-1,3-glucose residue by the glucosyltransferase, B3GALTL. Fucosylation mediates the efficient secretion of ADAMTS family members. Can also be C-glycosylated with one or two mannose molecules on tryptophan residues within the consensus sequence W-X-X-W of the TPRs, and N-glycosylated. These other glycosylations can also facilitate secretion.

It is found in the secreted. It localises to the extracellular space. The protein localises to the extracellular matrix. It carries out the reaction Glutamyl endopeptidase. Bonds cleaved include 370-Thr-Glu-Gly-Glu-|-Ala-Arg-Gly-Ser-377 in the interglobular domain of mammalian aggrecan.. Its function is as follows. Cleaves aggrecan, a cartilage proteoglycan, at the '392-Glu-|-Ala-393' site and may be involved in its turnover. Also cleaves COMP. May play an important role in the destruction of aggrecan in arthritic diseases. This Bos taurus (Bovine) protein is A disintegrin and metalloproteinase with thrombospondin motifs 4 (ADAMTS4).